A 186-amino-acid chain; its full sequence is Adenylate kinase (186 aa).

Gly14–Thr19 lines the ATP pocket. Residues Ser34 to Val63 are NMP. Residues Thr35, Arg40, Asp61–Val63, Gly84–Arg87, and Gln91 each bind AMP. An LID region spans residues Arg125–Asp135. Arg126 lines the ATP pocket. Positions 132 and 143 each coordinate AMP. Gly171 contributes to the ATP binding site.

Belongs to the adenylate kinase family. In terms of assembly, monomer.

It is found in the cytoplasm. The enzyme catalyses AMP + ATP = 2 ADP. It participates in purine metabolism; AMP biosynthesis via salvage pathway; AMP from ADP: step 1/1. Functionally, catalyzes the reversible transfer of the terminal phosphate group between ATP and AMP. Plays an important role in cellular energy homeostasis and in adenine nucleotide metabolism. The polypeptide is Adenylate kinase (Thermus thermophilus (strain ATCC BAA-163 / DSM 7039 / HB27)).